We begin with the raw amino-acid sequence, 1237 residues long: Putative structural protein VP3 (1237 aa).

One can recognise a PPPDE domain in the interval 963–1178 (GFLDKRVGDA…WDVSTAARMQ (216 aa)). Catalysis depends on residues H1001 and C1149.

It is found in the virion. The polypeptide is Putative structural protein VP3 (S3) (Lymantria dispar cypovirus 1 (isolate Rao) (LdCPV-1)).